The chain runs to 115 residues: Mediator of RNA polymerase II transcription subunit 11 (115 aa).

Positions 56–107 (YERLDKSTTQLRKEIQLLDENVGTRLLPINVNKKALGQDTEKMEEQLDLLSA) form a coiled coil.

This sequence belongs to the mediator complex subunit 11 family. Component of the Mediator complex, which is composed of at least 21 subunits that form three structurally distinct submodules. The Mediator head module contains MED6, MED8, MED11, SRB4/MED17, SRB5/MED18, ROX3/MED19, SRB2/MED20 and SRB6/MED22, the middle module contains MED1, MED4, NUT1/MED5, MED7, CSE2/MED9, NUT2/MED10, SRB7/MED21 and SOH1/MED31, and the tail module contains MED2, PGD1/MED3, RGR1/MED14, GAL11/MED15 and SIN4/MED16. The head and the middle modules interact directly with RNA polymerase II, whereas the elongated tail module interacts with gene-specific regulatory proteins. MED11 forms a heterodimer with SRB6/MED22. The MED11/22 heterodimer binds to and stabilizes the central head subunit SRB4/MED17. Interacts with TFIIH subunit RAD3.

Its subcellular location is the nucleus. In terms of biological role, component of the Mediator complex, a coactivator involved in the regulated transcription of nearly all RNA polymerase II-dependent genes. Mediator functions as a bridge to convey information from gene-specific regulatory proteins to the basal RNA polymerase II transcription machinery. The Mediator complex, having a compact conformation in its free form, is recruited to promoters by direct interactions with regulatory proteins and serves for the assembly of a functional pre-initiation complex (PIC) with RNA polymerase II and the general transcription factors. The Mediator complex unfolds to an extended conformation and partially surrounds RNA polymerase II, specifically interacting with the unphosphorylated form of the C-terminal domain (CTD) of RNA polymerase II. The Mediator complex dissociates from the RNA polymerase II holoenzyme and stays at the promoter when transcriptional elongation begins. The essential MED11/22 heterodimer specifically functions in promoting stable PIC formation. The protein is Mediator of RNA polymerase II transcription subunit 11 (MED11) of Saccharomyces cerevisiae (strain ATCC 204508 / S288c) (Baker's yeast).